We begin with the raw amino-acid sequence, 456 residues long: MSKNGTTGNKKKKTKLSTAATIAANIAKANATLNNNNNSNNNSNNTNIGNSINGIPSSLPPSVTLPVEELISFAPECLLFSQLLEFEEKLDASINKRLIDIQEASRRNSIKNIRTLRLSIYNTYSNQSAYYHLDNKSLNSVQERPSWSLRVEGKLLDESQDELVNKSIKSSSSSSSTANKRKFSSFFKKVFIQIGHRDTCEWDKSQTFTETDGFEIKRNGNQEVDIKILMYLDHVPQKYKVLGGLSQLLNIHTDTKPRIILALWHYIKSNTLLDAETKKITCDENLKNIFSLEELQFNQIPQLLREHLSPPDPLEFQYTLHLSGDAKDYEQAYDIQVEVDEPIFNPNPTMRKEISQLNDEINHHIQKVYQHKRKREFMEKLSSDPLGFLNDTTANLVKDFQVSKSTTSTGFEEERHASFYYQPMTEELVKNYLSKQTTPNPTPQQISMAPSTPQTP.

In terms of domain architecture, SWIB/MDM2 spans 234 to 310 (HVPQKYKVLG…PQLLREHLSP (77 aa)). The segment at 435–456 (KQTTPNPTPQQISMAPSTPQTP) is disordered.

The protein belongs to the SMARCD family. As to quaternary structure, part of a SWI-SNF complex.

It is found in the nucleus. In terms of biological role, involved in transcriptional activation and repression of select genes by chromatin remodeling (alteration of DNA-nucleosome topology). The protein is SWI/SNF complex component SNF12 homolog (snf12-1) of Dictyostelium discoideum (Social amoeba).